The primary structure comprises 245 residues: Orotidine 5'-phosphate decarboxylase (245 aa).

Substrate is bound by residues Asp22, Lys44, 71-80 (DLKFHDIPNT), Thr131, Arg192, Gln201, Gly221, and Arg222. Catalysis depends on Lys73, which acts as the Proton donor.

Belongs to the OMP decarboxylase family. Type 1 subfamily. Homodimer.

The catalysed reaction is orotidine 5'-phosphate + H(+) = UMP + CO2. It functions in the pathway pyrimidine metabolism; UMP biosynthesis via de novo pathway; UMP from orotate: step 2/2. Catalyzes the decarboxylation of orotidine 5'-monophosphate (OMP) to uridine 5'-monophosphate (UMP). The protein is Orotidine 5'-phosphate decarboxylase of Escherichia coli O6:K15:H31 (strain 536 / UPEC).